The primary structure comprises 62 residues: uncharacterized protein (62 aa).

This is an uncharacterized protein from Potato leafroll virus (strain Potato/Scotland/strain 1/1984) (PLrV).